We begin with the raw amino-acid sequence, 172 residues long: Water stress-inducible protein Rab21 (172 aa).

The segment at 1 to 172 (MEHQGQHGHV…KIKEKLPGQH (172 aa)) is disordered. A Type A repeat occupies 3–28 (HQGQHGHVTSRVDEYGNPVGTGAGHG). The span at 21 to 65 (VGTGAGHGQMGTAGMGTHGTTGGMGTHGTTGGMGTHGTTGTGGGQ) shows a compositional bias: gly residues. The stretch at 98 to 115 (RRKKGIKEKIKEKLPGGN) is one Type B repeat. Over residues 124–139 (GGTGGAYGQQGHGTGM) the composition is skewed to gly residues. One copy of the Type A repeat lies at 125–149 (GTGGAYGQQGHGTGMTTGTTGAHGT). Low complexity predominate over residues 140-153 (TTGTTGAHGTTTTD). The segment covering 154–172 (TGEKKGIMDKIKEKLPGQH) has biased composition (basic and acidic residues). Residues 156–172 (EKKGIMDKIKEKLPGQH) form a Type B repeat.

The protein belongs to the plant dehydrin family.

Its subcellular location is the cytoplasm. The chain is Water stress-inducible protein Rab21 (RAB21) from Oryza sativa subsp. indica (Rice).